The sequence spans 359 residues: MAP kinase-activated protein kinase 2 (359 aa).

One can recognise a Protein kinase domain in the interval 20 to 281 (VTSNTVLGYG…IQDVISNKWI (262 aa)). ATP is bound by residues 26–34 (LGYGINGKV) and lysine 49. The active-site Proton acceptor is aspartate 142.

The protein belongs to the protein kinase superfamily. CAMK Ser/Thr protein kinase family. Post-translationally, phosphorylated and activated by MAP kinase.

It catalyses the reaction L-seryl-[protein] + ATP = O-phospho-L-seryl-[protein] + ADP + H(+). It carries out the reaction L-threonyl-[protein] + ATP = O-phospho-L-threonyl-[protein] + ADP + H(+). In terms of biological role, its physiological substrate seems to be the small heat shock protein (HSP27/HSP25). The chain is MAP kinase-activated protein kinase 2 (MAPk-Ak2) from Drosophila melanogaster (Fruit fly).